Consider the following 874-residue polypeptide: Cellulose synthase catalytic subunit [UDP-forming] (874 aa).

4 helical membrane passes run 30-50 (SPFS…VFPL), 151-171 (ILGV…TQPF), 173-193 (PLSQ…VRRM), and 230-250 (LVCG…LVLG). The tract at residues 271–364 (QWPTVDIFVP…FVAIFDCDHV (94 aa)) is catalytic subdomain A. Asp-313 is an active-site residue. Substrate-binding residues include Asp-360 and Asp-362. The interval 441–501 (KPLDEIGGIA…GQRIRWARGM (61 aa)) is catalytic subdomain B. Asp-457 is an active-site residue. The next 5 helical transmembrane spans lie at 525 to 545 (LNAM…TAPL), 547 to 567 (FLLL…LFVI), 592 to 612 (IYET…LINP), 634 to 654 (VISR…AAGV), and 668 to 688 (VIVS…AVAV). In terms of domain architecture, PilZ spans 694–790 (QVRRAHRVEI…QHIDFVQCTF (97 aa)). A helical transmembrane segment spans residues 833–853 (SVKVIFRSLTALIAWIVSFIP).

This sequence belongs to the glycosyltransferase 2 family. Mg(2+) is required as a cofactor.

Its subcellular location is the cell inner membrane. The catalysed reaction is [(1-&gt;4)-beta-D-glucosyl](n) + UDP-alpha-D-glucose = [(1-&gt;4)-beta-D-glucosyl](n+1) + UDP + H(+). It participates in glycan metabolism; bacterial cellulose biosynthesis. Its activity is regulated as follows. Activated by bis-(3'-5') cyclic diguanylic acid (c-di-GMP). In terms of biological role, catalytic subunit of cellulose synthase. It polymerizes uridine 5'-diphosphate glucose to cellulose, which is produced as an extracellular component for mechanical and chemical protection at the onset of the stationary phase, when the cells exhibit multicellular behavior (rdar morphotype). Coexpression of cellulose and thin aggregative fimbriae leads to a hydrophobic network with tightly packed cells embedded in a highly inert matrix. This is Cellulose synthase catalytic subunit [UDP-forming] (bcsA) from Salmonella typhi.